A 96-amino-acid chain; its full sequence is Prokineticin Bm8-d (96 aa).

The signal sequence occupies residues 1–19; sequence MKCFAQIVVLLLVIAFSHG. 5 disulfide bridges follow: C26-C38, C32-C50, C37-C78, C60-C86, and C80-C95.

This sequence belongs to the AVIT (prokineticin) family. Expressed by the skin glands.

The protein resides in the secreted. Potent agonist for both PKR1/PROKR1 and PKR2/PROKR2, and inducer of a potent and long-lasting hyperalgesia. Also potentiates capsaicin-induced TRPV1 current, when tested on DRG neurons. At subnanomolar concentrations, this protein both induces potent chemotaxis of macrophages and stimulates LPS-induced production of the pro-inflammatory cytokines IL-1 and IL-12. In vivo, potently stimulates the contraction of the guinea-pig gastrointestinal (GI) smooth muscle (nanomolar concentration). In Bombina maxima (Giant fire-bellied toad), this protein is Prokineticin Bm8-d.